We begin with the raw amino-acid sequence, 252 residues long: Accessory gland protein Acp32CD (252 aa).

The N-terminal stretch at 1–19 (MWRMRMRLLTGYLVLLALG) is a signal peptide. Residues 42 to 252 (PDGEGGTGVD…GAKEDDYEEM (211 aa)) form a disordered region. Residues 44-69 (GEGGTGVDGGGGGAGGGAAGPGGGTG) show a composition bias toward gly residues. Composition is skewed to basic and acidic residues over residues 104–122 (AIGK…DSKD), 142–153 (SDSKDAKDRQDK), 159–171 (QEGK…HHSS), and 209–225 (NGAR…KEVA).

Seminal fluid.

It localises to the secreted. Functionally, responsible for physiological and behavioral changes in mated female flies. The sequence is that of Accessory gland protein Acp32CD (Acp32CD) from Drosophila melanogaster (Fruit fly).